The chain runs to 925 residues: MATPSMMPQWSYMHIAGQDASEYLSPGLVQFARATDTYFSLGNKFRNPTVAPTHDVTTDRSQRLTLRFVPVDREDTAYSYKVRFTLAVGDNRVLDMASTYFDIRGVLDRGPSFKPYSGTAYNSLAPKTAPNPCEWKDNNKIKVRGQAPFIGTNINKDNGIQIGTDTTNQPIYADKTYQPEPQVGQTQWNSEVGAAQKVAGRVLKDTTPMLPCYGSYAKPTNEKGGQASLITNGTDQTLTSDVNLQFFALPSTPNEPKAVLYAENVSIEAPDTHLVYKPDVAQGTISSADLLTQQAAPNRPNYIGFRDNFIGLMYYNSTGNMGVLAGQASQLNAVVDLQDRNTELSYQLMLDALGDRSRYFSMWNQAVDSYDPDVRIIENHGVEDELPNYCFPLGGSAATDTYSGIKANGQTWTADDNYADRGAEIESGNIFAMEINLAANLWRSFLYSNVALYLPDSYKITPDNITLPENKNTYAYMNGRVAVPSALDTYVNIGARWSPDPMDNVNPFNHHRNAGLRYRSMLLGNGRYVPFHIQVPQKFFAIKNLLLLPGSYTYEWNFRKDVNMILQSSLGNDLRVDGASVRFDSINLYANFFPMAHNTASTLEAMLRNDTNDQSFNDYLCAANMLYPIPSNATSVPISIPSRNWAAFRGWSFTRLKTKETPSLGSGFDPYFTYSGSVPYLDGTFYLNHTFKKVSIMFDSSVSWPGNDRLLTPNEFEIKRTVDGEGYNVAQCNMTKDWFLIQMLSHYNIGYQGFYVPESYKDRMYSFFRNFQPMSRQVVNTTTYKEYQNVTLPFQHNNSGFVGYMGPTMREGQAYPANYPYPLIGQTAVPSLTQKKFLCDRTMWRIPFSSNFMSMGALTDLGQNMLYANSAHALDMTFEVDPMDEPTLLYVLFEVFDVVRIHQPHRGVIEAVYLRTPFSAGNATT.

Alanine 2 is subject to N-acetylalanine; by host. At tyrosine 913 the chain carries Phosphotyrosine; by host.

It belongs to the adenoviridae hexon protein family. In terms of assembly, homotrimer. Interacts with the capsid vertex protein; this interaction binds the peripentonal hexons to the neighboring penton base. Interacts with the hexon-linking protein; this interaction tethers the hexons surrounding the penton to those situated in the central plate of the facet. Interacts with the hexon-interlacing protein; this interaction lashes the hexons together. Interacts with host dyneins DYNC1LI1 and DYNC1I2; this interaction might be involved in intracellular microtubule-dependent transport of incoming viral capsid. Interacts with the shutoff protein; this interaction allows folding and formation of hexons trimers. Interacts with pre-protein VI; this interaction probably allows nuclear import of hexon trimers and possibly pre-capsid assembly.

The protein resides in the virion. It localises to the host nucleus. In terms of biological role, major capsid protein that self-associates to form 240 hexon trimers, each in the shape of a hexagon, building most of the pseudo T=25 capsid. Assembled into trimeric units with the help of the chaperone shutoff protein. Transported by pre-protein VI to the nucleus where it associates with other structural proteins to form an empty capsid. Might be involved, through its interaction with host dyneins, in the intracellular microtubule-dependent transport of incoming viral capsid to the nucleus. The sequence is that of Hexon protein from Human adenovirus F serotype 41 (HAdV-41).